Reading from the N-terminus, the 432-residue chain is Adenylosuccinate synthetase (432 aa).

GTP is bound by residues 13–19 (GDEGKGK) and 41–43 (GHT). The active-site Proton acceptor is the Asp-14. 2 residues coordinate Mg(2+): Asp-14 and Gly-41. IMP is bound by residues 14 to 17 (DEGK), 39 to 42 (NAGH), Thr-130, Arg-144, Gln-225, Thr-240, and Arg-304. His-42 functions as the Proton donor in the catalytic mechanism. Residue 300–306 (AVTGRPR) coordinates substrate. GTP-binding positions include Arg-306, 332–334 (KLD), and 415–417 (STG).

The protein belongs to the adenylosuccinate synthetase family. In terms of assembly, homodimer. Mg(2+) serves as cofactor.

It is found in the cytoplasm. The catalysed reaction is IMP + L-aspartate + GTP = N(6)-(1,2-dicarboxyethyl)-AMP + GDP + phosphate + 2 H(+). Its pathway is purine metabolism; AMP biosynthesis via de novo pathway; AMP from IMP: step 1/2. Plays an important role in the de novo pathway of purine nucleotide biosynthesis. Catalyzes the first committed step in the biosynthesis of AMP from IMP. The chain is Adenylosuccinate synthetase from Haemophilus influenzae (strain PittEE).